The primary structure comprises 582 residues: 2-succinyl-5-enolpyruvyl-6-hydroxy-3-cyclohexene-1-carboxylate synthase (582 aa).

Belongs to the TPP enzyme family. MenD subfamily. As to quaternary structure, homodimer. The cofactor is Mg(2+). Mn(2+) serves as cofactor. Thiamine diphosphate is required as a cofactor.

The enzyme catalyses isochorismate + 2-oxoglutarate + H(+) = 5-enolpyruvoyl-6-hydroxy-2-succinyl-cyclohex-3-ene-1-carboxylate + CO2. It functions in the pathway quinol/quinone metabolism; 1,4-dihydroxy-2-naphthoate biosynthesis; 1,4-dihydroxy-2-naphthoate from chorismate: step 2/7. It participates in cofactor biosynthesis; phylloquinone biosynthesis. Functionally, catalyzes the thiamine diphosphate-dependent decarboxylation of 2-oxoglutarate and the subsequent addition of the resulting succinic semialdehyde-thiamine pyrophosphate anion to isochorismate to yield 2-succinyl-5-enolpyruvyl-6-hydroxy-3-cyclohexene-1-carboxylate (SEPHCHC). This is 2-succinyl-5-enolpyruvyl-6-hydroxy-3-cyclohexene-1-carboxylate synthase from Prochlorococcus marinus (strain MIT 9303).